The following is a 445-amino-acid chain: CBL-interacting serine/threonine-protein kinase 5 (445 aa).

One can recognise a Protein kinase domain in the interval 12-267 (YEMGRLLGKG…IPAIMRTPWL (256 aa)). ATP is bound by residues 18 to 26 (LGKGTFAKV) and lysine 41. Aspartate 135 (proton acceptor) is an active-site residue. An activation loop region spans residues 153 to 182 (DFGLSALPEQILQDGLLHTQCGTPAYVAPE). Serine 157 carries the phosphoserine modification. Threonine 171 bears the Phosphothreonine mark. The region spanning 307 to 332 (ISPKFFNAFEFISSMSSGFDLSSLFE) is the NAF domain. A PPI region spans residues 336-366 (KVQSVFTSRSSATEVMEKIETVTKEMNMKVK).

This sequence belongs to the protein kinase superfamily. CAMK Ser/Thr protein kinase family. SNF1 subfamily. It depends on Mn(2+) as a cofactor.

It catalyses the reaction L-seryl-[protein] + ATP = O-phospho-L-seryl-[protein] + ADP + H(+). It carries out the reaction L-threonyl-[protein] + ATP = O-phospho-L-threonyl-[protein] + ADP + H(+). In terms of biological role, CIPK serine-threonine protein kinases interact with CBL proteins. Binding of a CBL protein to the regulatory NAF domain of CIPK protein lead to the activation of the kinase in a calcium-dependent manner. The protein is CBL-interacting serine/threonine-protein kinase 5 (CIPK5) of Arabidopsis thaliana (Mouse-ear cress).